We begin with the raw amino-acid sequence, 254 residues long: UPF0246 protein CPR_2119 (254 aa).

It belongs to the UPF0246 family.

The polypeptide is UPF0246 protein CPR_2119 (Clostridium perfringens (strain SM101 / Type A)).